Reading from the N-terminus, the 202-residue chain is Imidazoleglycerol-phosphate dehydratase (202 aa).

Belongs to the imidazoleglycerol-phosphate dehydratase family.

The protein localises to the cytoplasm. The catalysed reaction is D-erythro-1-(imidazol-4-yl)glycerol 3-phosphate = 3-(imidazol-4-yl)-2-oxopropyl phosphate + H2O. The protein operates within amino-acid biosynthesis; L-histidine biosynthesis; L-histidine from 5-phospho-alpha-D-ribose 1-diphosphate: step 6/9. The protein is Imidazoleglycerol-phosphate dehydratase of Nocardioides sp. (strain ATCC BAA-499 / JS614).